We begin with the raw amino-acid sequence, 430 residues long: Asparagine--tRNA ligase (430 aa).

It belongs to the class-II aminoacyl-tRNA synthetase family. As to quaternary structure, homodimer.

It localises to the cytoplasm. The enzyme catalyses tRNA(Asn) + L-asparagine + ATP = L-asparaginyl-tRNA(Asn) + AMP + diphosphate + H(+). This chain is Asparagine--tRNA ligase, found in Geobacillus thermodenitrificans (strain NG80-2).